The chain runs to 330 residues: Nitrilase 3 (330 aa).

Residues Val-4–Phe-273 enclose the CN hydrolase domain. Glu-44 acts as the Proton acceptor in catalysis. The Proton donor role is filled by Lys-128. Residue Cys-162 is the Nucleophile of the active site. The segment at Arg-310–Ala-330 is disordered.

Belongs to the carbon-nitrogen hydrolase superfamily. Nitrilase family.

It catalyses the reaction a nitrile + 2 H2O = a carboxylate + NH4(+). In terms of biological role, nitrilases catalyze the mild hydrolytic conversion of organonitriles directly to the corresponding carboxylic acids. In Unknown prokaryotic organism, this protein is Nitrilase 3.